Reading from the N-terminus, the 329-residue chain is Biotin synthase (329 aa).

A Radical SAM core domain is found at 38-262; that stretch reads NTIQVSTLLS…IMPHSYIRLS (225 aa). [4Fe-4S] cluster-binding residues include cysteine 53, cysteine 57, and cysteine 60. 4 residues coordinate [2Fe-2S] cluster: cysteine 97, cysteine 128, cysteine 188, and arginine 260.

It belongs to the radical SAM superfamily. Biotin synthase family. Homodimer. Requires [4Fe-4S] cluster as cofactor. [2Fe-2S] cluster is required as a cofactor.

The catalysed reaction is (4R,5S)-dethiobiotin + (sulfur carrier)-SH + 2 reduced [2Fe-2S]-[ferredoxin] + 2 S-adenosyl-L-methionine = (sulfur carrier)-H + biotin + 2 5'-deoxyadenosine + 2 L-methionine + 2 oxidized [2Fe-2S]-[ferredoxin]. It functions in the pathway cofactor biosynthesis; biotin biosynthesis; biotin from 7,8-diaminononanoate: step 2/2. In terms of biological role, catalyzes the conversion of dethiobiotin (DTB) to biotin by the insertion of a sulfur atom into dethiobiotin via a radical-based mechanism. This chain is Biotin synthase, found in Acinetobacter baumannii (strain SDF).